A 433-amino-acid chain; its full sequence is Acetylcholine receptor-like protein cup-4 (433 aa).

An N-terminal signal peptide occupies residues Met1–Ser24. N-linked (GlcNAc...) asparagine glycosylation is found at Asn41 and Asn68. An intrachain disulfide couples Cys178 to Cys192. N-linked (GlcNAc...) asparagine glycans are attached at residues Asn237 and Asn249. Helical transmembrane passes span Glu282–Ile302, Ser307–Val327, Ile337–Leu357, and Pro413–Leu433.

It belongs to the ligand-gated ion channel (TC 1.A.9) family. Acetylcholine receptor (TC 1.A.9.1) subfamily. As to expression, expressed in coelomocytes.

It is found in the cytoplasmic vesicle membrane. Thought to regulate endocytosis in coelomocytes through modulation of phospholipase C activity. Possible acetylcholine receptor. The polypeptide is Acetylcholine receptor-like protein cup-4 (cup-4) (Caenorhabditis elegans).